A 307-amino-acid polypeptide reads, in one-letter code: Myeloid-associated differentiation marker-like protein 2 (307 aa).

2 consecutive MARVEL domains span residues 17-154 (AVTS…ARPG) and 159-303 (YMAT…RIRF). The next 7 membrane-spanning stretches (helical) occupy residues 53–73 (FCVAAWGFCFALSVLVVACEF), 90–110 (AFAMLATLLSATAAVIYPLYF), 129–149 (LAASVFAGLLFLAYATEVALT), 163–183 (VSGLLKIVQAFVACIIFGALV), 198–218 (VAVYSLCFLATVVVVILSVLG), 232–252 (VVYTFLAVLLYLSAAVIWPVF), and 278–298 (LVVATFTYVNLLLYVADLAYS).

The protein belongs to the MAL family.

It is found in the membrane. In Bos taurus (Bovine), this protein is Myeloid-associated differentiation marker-like protein 2 (MYADML2).